Reading from the N-terminus, the 408-residue chain is Multidrug resistance protein MdtG (408 aa).

11 helical membrane passes run 16-36 (LIVAWLGCFLTGAAFSLVMPF), 58-78 (IVFSITFLFSAIASPFWGGLA), 92-112 (LGMGIVMILMGMAQNIWQFLI), 115-135 (ALLGLLGGFVPNANALIATQV), 146-166 (TLSTGGVSGALLGPLAGGLLA), 173-193 (PVFFITASVLMLCFVVTLLCI), 224-244 (LFVTTMIIQIASGSIAPILTL), 253-273 (VGNIAFISGMIASVPGVAALL), 290-310 (ILIAALIFSVLLLIPMSFVQT), 319-339 (FLLGAADGALLPAVQTLLVYN), and 378-398 (AVFLVTACVVLFNIIYSWNSL).

The protein belongs to the major facilitator superfamily. DHA1 family. MdtG (TC 2.A.1.2.20) subfamily.

It localises to the cell inner membrane. Functionally, confers resistance to fosfomycin and deoxycholate. This is Multidrug resistance protein MdtG from Escherichia fergusonii (strain ATCC 35469 / DSM 13698 / CCUG 18766 / IAM 14443 / JCM 21226 / LMG 7866 / NBRC 102419 / NCTC 12128 / CDC 0568-73).